We begin with the raw amino-acid sequence, 526 residues long: ATP-dependent RNA helicase DBP3 (526 aa).

A compositionally biased stretch (basic and acidic residues) spans 1–33; sequence MVEEHKNKKRRQEDGPADVPEKKVKVSKSEKKD. The tract at residues 1–86 is disordered; the sequence is MVEEHKNKKR…SSQGYTQSES (86 aa). Residues 34–65 are compositionally biased toward basic residues; sequence KKEKKEKKEKKEKKEKKEKKEKKEKKEKKKKY. The segment covering 69 to 86 has biased composition (polar residues); sequence ATISGSAQSSQGYTQSES. Residues 118–144 carry the Q motif motif; the sequence is LSFDQIQLNSKISAVVNKFPTPTPIQS. The Helicase ATP-binding domain maps to 147–318; that stretch reads WPYLLSGKDV…STFMNQPVKV (172 aa). 160 to 167 lines the ATP pocket; it reads AETGSGKT. Positions 265–268 match the DEAD box motif; that stretch reads DEAD. The Helicase C-terminal domain occupies 334-496; the sequence is QIVEVIEPFD…PVPDELLKFG (163 aa).

The protein belongs to the DEAD box helicase family. DDX5/DBP2 subfamily.

The protein resides in the nucleus. It is found in the nucleolus. It catalyses the reaction ATP + H2O = ADP + phosphate + H(+). In terms of biological role, ATP-dependent RNA helicase required for 60S ribosomal subunit synthesis. Involved in efficient pre-rRNA processing, predominantly at site A3, which is necessary for the normal formation of 25S and 5.8S rRNAs. The protein is ATP-dependent RNA helicase DBP3 (DBP3) of Scheffersomyces stipitis (strain ATCC 58785 / CBS 6054 / NBRC 10063 / NRRL Y-11545) (Yeast).